The chain runs to 413 residues: Probable alpha-tubulin polyglutamylase Ttll1 (413 aa).

The region spanning 2–370 (ASKKLKYKTD…DDWNDDSSKT (369 aa)) is the TTL domain. Residues 184–187 (SRYI), K197, and D199 contribute to the ATP site.

It belongs to the tubulin polyglutamylase family.

It localises to the cytoplasm. Its subcellular location is the cytoskeleton. The protein resides in the cilium basal body. It is found in the contractile vacuole. Functionally, probable tubulin polyglutamylase with a strong preference for alpha-tubulin. Modifies alpha-tubulin, generating side chains of glutamate on the gamma-carboxyl groups of specific glutamate residues within the C-terminal tail of alpha-tubulin. This Tetrahymena thermophila (strain SB210) protein is Probable alpha-tubulin polyglutamylase Ttll1 (Ttll1).